Consider the following 116-residue polypeptide: Non-specific lipid-transfer protein 5 (116 aa).

The signal sequence occupies residues 1 to 24 (MARSMKLACVVLVMCMIVAPMAEG). Disulfide bonds link Cys-28–Cys-75, Cys-38–Cys-52, Cys-53–Cys-98, and Cys-73–Cys-112.

Belongs to the plant LTP family.

In terms of biological role, plant non-specific lipid-transfer proteins transfer phospholipids as well as galactolipids across membranes. May play a role in wax or cutin deposition in the cell walls of expanding epidermal cells and certain secretory tissues. The polypeptide is Non-specific lipid-transfer protein 5 (Lens culinaris (Lentil)).